Here is a 414-residue protein sequence, read N- to C-terminus: Histidine--tRNA ligase (414 aa).

This sequence belongs to the class-II aminoacyl-tRNA synthetase family. As to quaternary structure, homodimer.

It is found in the cytoplasm. The catalysed reaction is tRNA(His) + L-histidine + ATP = L-histidyl-tRNA(His) + AMP + diphosphate + H(+). This Mycoplasma capricolum subsp. capricolum (strain California kid / ATCC 27343 / NCTC 10154) protein is Histidine--tRNA ligase.